The primary structure comprises 249 residues: Domoic acid biosynthesis cluster protein B (249 aa).

In terms of biological role, unknown function: part of the gene cluster that mediates the biosynthesis of domoic acid (DA) and derivatives, natural products with neurochemical activity acting as ionotropic glutamate receptor (iGluR) agonists, thus being neurotoxins causing amnesic shellfish poisoning (ASP). The polypeptide is Domoic acid biosynthesis cluster protein B (Pseudo-nitzschia multiseries (Marine planktonic diatom)).